The sequence spans 419 residues: L-rhamnose isomerase (419 aa).

Mn(2+) contacts are provided by His262, Asp294, and Asp296.

This sequence belongs to the rhamnose isomerase family. As to quaternary structure, homotetramer. Mn(2+) is required as a cofactor.

The protein resides in the cytoplasm. The catalysed reaction is L-rhamnopyranose = L-rhamnulose. Its pathway is carbohydrate degradation; L-rhamnose degradation; glycerone phosphate from L-rhamnose: step 1/3. Its function is as follows. Catalyzes the interconversion of L-rhamnose and L-rhamnulose. The chain is L-rhamnose isomerase from Shigella sonnei (strain Ss046).